Here is a 659-residue protein sequence, read N- to C-terminus: Sodium/nucleoside cotransporter 2 (659 aa).

Positions 1 to 10 (MAKSEGRKSA) are enriched in basic and acidic residues. Residues 1 to 22 (MAKSEGRKSASQDTSENGMENP) form a disordered region. The residue at position 46 (Ser46) is a Phosphoserine. 14 consecutive transmembrane segments (helical) span residues 81–101 (ILLG…CILN), 105–124 (ALAL…CHFL), 149–167 (KRVF…LALD), 173–193 (EQLI…ACSK), 201–221 (RTVF…IRTE), 234–254 (IQIF…DTLV), 261–281 (QSLP…YLGL), 296–315 (TMGT…FVGM), 337–356 (VMTG…FISF), 363–382 (LISA…KLVY), 424–444 (VAAN…TLSW), 455–475 (TFQV…GVQW), 530–550 (ATFS…LGGL), and 568–588 (ALFT…ILYV).

Belongs to the concentrative nucleoside transporter (CNT) (TC 2.A.41) family. As to expression, expressed in liver (in bile canalicular membrane vesicles (CMV) but not in sinusoidal vesicles), jejunum, spleen and heart. Also expressed in brain and skeletal muscle. Not expressed in kidney, muscle and lung.

It localises to the membrane. It is found in the apicolateral cell membrane. It catalyses the reaction adenosine(out) + Na(+)(out) = adenosine(in) + Na(+)(in). It carries out the reaction inosine(out) + Na(+)(out) = inosine(in) + Na(+)(in). The catalysed reaction is guanosine(out) + Na(+)(out) = guanosine(in) + Na(+)(in). The enzyme catalyses uridine(out) + Na(+)(out) = uridine(in) + Na(+)(in). Its activity is regulated as follows. Inhibited by formycin B, partially inhibited by purine analog ara-A. In terms of biological role, sodium-dependent and purine-selective. Exhibits the transport characteristics of the nucleoside transport system cif or N1 subtype (N1/cif) (selective for purine nucleosides and uridine). Accepts purine, analogs of purine nucleosides and uridine, and exhibits high affinity for adenosine. May contribute to regulate the transport of organic compounds in testes across the blood-testis-barrier. This Rattus norvegicus (Rat) protein is Sodium/nucleoside cotransporter 2 (Slc28a2).